A 236-amino-acid polypeptide reads, in one-letter code: 2-C-methyl-D-erythritol 4-phosphate cytidylyltransferase (236 aa).

This sequence belongs to the IspD/TarI cytidylyltransferase family. IspD subfamily. Homodimer.

It carries out the reaction 2-C-methyl-D-erythritol 4-phosphate + CTP + H(+) = 4-CDP-2-C-methyl-D-erythritol + diphosphate. It participates in isoprenoid biosynthesis; isopentenyl diphosphate biosynthesis via DXP pathway; isopentenyl diphosphate from 1-deoxy-D-xylulose 5-phosphate: step 2/6. Its function is as follows. Catalyzes the formation of 4-diphosphocytidyl-2-C-methyl-D-erythritol from CTP and 2-C-methyl-D-erythritol 4-phosphate (MEP). This chain is 2-C-methyl-D-erythritol 4-phosphate cytidylyltransferase, found in Escherichia fergusonii (strain ATCC 35469 / DSM 13698 / CCUG 18766 / IAM 14443 / JCM 21226 / LMG 7866 / NBRC 102419 / NCTC 12128 / CDC 0568-73).